Consider the following 270-residue polypeptide: uncharacterized protein (270 aa).

It to T.pallidum TP_0127, TP_0315 and TP_0618.

This is an uncharacterized protein from Treponema pallidum (strain Nichols).